A 483-amino-acid chain; its full sequence is Regulatory protein ViaA (483 aa).

The protein belongs to the ViaA family. Homodimer. Interacts with RavA.

It is found in the cytoplasm. Component of the RavA-ViaA chaperone complex, which may act on the membrane to optimize the function of some of the respiratory chains. ViaA stimulates the ATPase activity of RavA. The polypeptide is Regulatory protein ViaA (Salmonella arizonae (strain ATCC BAA-731 / CDC346-86 / RSK2980)).